The following is a 177-amino-acid chain: Inorganic pyrophosphatase (177 aa).

Substrate-binding residues include K30, R44, and Y56. The Mg(2+) site is built by D66, D71, and D103. Y142 is a binding site for substrate.

This sequence belongs to the PPase family. In terms of assembly, homohexamer. Mg(2+) is required as a cofactor.

It localises to the cytoplasm. It catalyses the reaction diphosphate + H2O = 2 phosphate + H(+). Functionally, catalyzes the hydrolysis of inorganic pyrophosphate (PPi) forming two phosphate ions. This Caulobacter vibrioides (strain ATCC 19089 / CIP 103742 / CB 15) (Caulobacter crescentus) protein is Inorganic pyrophosphatase.